The chain runs to 204 residues: Probable chorismate pyruvate-lyase (204 aa).

Substrate contacts are provided by R75, L113, and E160.

Belongs to the UbiC family.

It is found in the cytoplasm. It catalyses the reaction chorismate = 4-hydroxybenzoate + pyruvate. It participates in cofactor biosynthesis; ubiquinone biosynthesis. Its function is as follows. Removes the pyruvyl group from chorismate, with concomitant aromatization of the ring, to provide 4-hydroxybenzoate (4HB) for the ubiquinone pathway. This is Probable chorismate pyruvate-lyase from Alcanivorax borkumensis (strain ATCC 700651 / DSM 11573 / NCIMB 13689 / SK2).